Here is a 350-residue protein sequence, read N- to C-terminus: 3-dehydroquinate synthase (350 aa).

Residues 106–110, 130–131, K143, and K152 contribute to the NAD(+) site; these read GVIGD and TS. Positions 185, 246, and 263 each coordinate Zn(2+).

Belongs to the sugar phosphate cyclases superfamily. Dehydroquinate synthase family. Co(2+) is required as a cofactor. Zn(2+) serves as cofactor. Requires NAD(+) as cofactor.

The protein resides in the cytoplasm. The catalysed reaction is 7-phospho-2-dehydro-3-deoxy-D-arabino-heptonate = 3-dehydroquinate + phosphate. It functions in the pathway metabolic intermediate biosynthesis; chorismate biosynthesis; chorismate from D-erythrose 4-phosphate and phosphoenolpyruvate: step 2/7. Functionally, catalyzes the conversion of 3-deoxy-D-arabino-heptulosonate 7-phosphate (DAHP) to dehydroquinate (DHQ). The sequence is that of 3-dehydroquinate synthase from Clostridium beijerinckii (strain ATCC 51743 / NCIMB 8052) (Clostridium acetobutylicum).